The sequence spans 141 residues: Vasotocin-neurophysin VT (141 aa).

Cys1 and Cys6 are joined by a disulfide. Gly9 carries the post-translational modification Glycine amide. Cystine bridges form between Cys22–Cys66, Cys25–Cys39, Cys33–Cys56, Cys40–Cys46, Cys73–Cys85, Cys79–Cys97, and Cys86–Cys91. A glycan (N-linked (GlcNAc...) asparagine) is linked at Asn117.

It belongs to the vasopressin/oxytocin family. Seven disulfide bonds are present in neurophysin.

Its subcellular location is the secreted. Its function is as follows. Vasotocin is an antidiuretic hormone. The polypeptide is Vasotocin-neurophysin VT (Pelophylax lessonae (Pool frog)).